Consider the following 175-residue polypeptide: Large ribosomal subunit protein uL10 (175 aa).

It belongs to the universal ribosomal protein uL10 family. As to quaternary structure, part of the ribosomal stalk of the 50S ribosomal subunit. The N-terminus interacts with L11 and the large rRNA to form the base of the stalk. The C-terminus forms an elongated spine to which L12 dimers bind in a sequential fashion forming a multimeric L10(L12)X complex.

In terms of biological role, forms part of the ribosomal stalk, playing a central role in the interaction of the ribosome with GTP-bound translation factors. The chain is Large ribosomal subunit protein uL10 from Psychrobacter cryohalolentis (strain ATCC BAA-1226 / DSM 17306 / VKM B-2378 / K5).